The sequence spans 409 residues: Forkhead box protein A2 (409 aa).

The fork-head DNA-binding region spans 150–241; the sequence is AKPPYSYISL…GNMFENGCYL (92 aa). A compositionally biased stretch (basic and acidic residues) spans 250-262; it reads DKKLSKDPSRKTS. The disordered stretch occupies residues 250-315; the sequence is DKKLSKDPSR…AASPTSQAQH (66 aa). Positions 263-286 are enriched in low complexity; it reads EGGSNSSSESCNGNESPHSNSSSN.

It is found in the nucleus. May play a crucial role in specification of both the axial mesendoderm and the ventral nervous system. The protein is Forkhead box protein A2 (foxa2) of Danio rerio (Zebrafish).